Here is a 172-residue protein sequence, read N- to C-terminus: ATP synthase subunit b (172 aa).

Residues 12-32 traverse the membrane as a helical segment; that stretch reads SLYIGDLVFYIVTFIILMLLV. Composition is skewed to basic and acidic residues over residues 63 to 74 and 116 to 131; these read ESAEKMAAKRQA and AQKDAEQARRDALNSA. The interval 63-131 is disordered; that stretch reads ESAEKMAAKR…QARRDALNSA (69 aa).

It belongs to the ATPase B chain family. As to quaternary structure, F-type ATPases have 2 components, F(1) - the catalytic core - and F(0) - the membrane proton channel. F(1) has five subunits: alpha(3), beta(3), gamma(1), delta(1), epsilon(1). F(0) has three main subunits: a(1), b(2) and c(10-14). The alpha and beta chains form an alternating ring which encloses part of the gamma chain. F(1) is attached to F(0) by a central stalk formed by the gamma and epsilon chains, while a peripheral stalk is formed by the delta and b chains.

The protein resides in the cell membrane. F(1)F(0) ATP synthase produces ATP from ADP in the presence of a proton or sodium gradient. F-type ATPases consist of two structural domains, F(1) containing the extramembraneous catalytic core and F(0) containing the membrane proton channel, linked together by a central stalk and a peripheral stalk. During catalysis, ATP synthesis in the catalytic domain of F(1) is coupled via a rotary mechanism of the central stalk subunits to proton translocation. Its function is as follows. Component of the F(0) channel, it forms part of the peripheral stalk, linking F(1) to F(0). The chain is ATP synthase subunit b from Limosilactobacillus reuteri (strain DSM 20016) (Lactobacillus reuteri).